A 331-amino-acid polypeptide reads, in one-letter code: Gem-associated protein 2 (331 aa).

3 disordered regions span residues 1-23, 101-130, and 151-222; these read MDEFQSKAFEVGEEIEPDDNEPL, SNRPSNNNNNNNNNNNNNNNNNNNNNLIPQ, and NNNN…TKKP. The segment covering 11–21 has biased composition (acidic residues); it reads VGEEIEPDDNE. Over residues 106–126 the composition is skewed to low complexity; sequence NNNNNNNNNNNNNNNNNNNNN. Residues 165 to 215 show a composition bias toward acidic residues; that stretch reads DNQEDDDDDENNEDYEYNENKEEEEEEEEEEEEEEEVEEEEEEEEEEEEVV. Residues 173–224 adopt a coiled-coil conformation; it reads DENNEDYEYNENKEEEEEEEEEEEEEEEVEEEEEEEEEEEEVVDYSTKKPTL.

Belongs to the gemin-2 family.

It is found in the nucleus. The protein localises to the gem. The protein resides in the cytoplasm. The SMN complex catalyzes the assembly of small nuclear ribonucleoproteins (snRNPs), the building blocks of the spliceosome, and thereby plays an important role in the splicing of cellular pre-mRNAs. Most spliceosomal snRNPs contain a common set of Sm proteins SNRPB, SNRPD1, SNRPD2, SNRPD3, SNRPE, SNRPF and SNRPG that assemble in a heptameric protein ring on the Sm site of the small nuclear RNA to form the core snRNP (Sm core). In the cytosol, the Sm proteins SNRPD1, SNRPD2, SNRPE, SNRPF and SNRPG (5Sm) are trapped in an inactive 6S pICln-Sm complex by the chaperone CLNS1A that controls the assembly of the core snRNP. To assemble core snRNPs, the SMN complex accepts the trapped 5Sm proteins from CLNS1A. Binding of snRNA inside 5Sm ultimately triggers eviction of the SMN complex, thereby allowing binding of SNRPD3 and SNRPB to complete assembly of the core snRNP. Within the SMN complex, GEMIN2 constrains the conformation of 5Sm, thereby promoting 5Sm binding to snRNA containing the snRNP code (a nonameric Sm site and a 3'-adjacent stem-loop), thus preventing progression of assembly until a cognate substrate is bound. Its function is as follows. May play an essential role in spliceosomal snRNP assembly in the cytoplasm and may be required for pre-mRNA splicing in the nucleus. This chain is Gem-associated protein 2 (gemin2), found in Dictyostelium discoideum (Social amoeba).